The primary structure comprises 226 residues: Histone H2B.v1 (226 aa).

The disordered stretch occupies residues 100 to 130; that stretch reads FNSAKQYPPQPPPAKTATPSSPSSIPAPPIS. Residues 114-123 show a composition bias toward low complexity; that stretch reads KTATPSSPSS.

Belongs to the histone H2B family.

This chain is Histone H2B.v1 (H2Bv1), found in Dictyostelium discoideum (Social amoeba).